Here is a 196-residue protein sequence, read N- to C-terminus: Probable GTP-binding protein EngB (196 aa).

Residues 22 to 194 enclose the EngB-type G domain; the sequence is DKKEIAFAGR…LKTIGEILGD (173 aa). Residues 30 to 37, 56 to 60, 74 to 77, 141 to 144, and 173 to 175 each bind GTP; these read GRSNVGKS, GKTRS, DLPG, TKSD, and FSS. Ser-37 and Thr-58 together coordinate Mg(2+).

It belongs to the TRAFAC class TrmE-Era-EngA-EngB-Septin-like GTPase superfamily. EngB GTPase family. Mg(2+) serves as cofactor.

Functionally, necessary for normal cell division and for the maintenance of normal septation. This is Probable GTP-binding protein EngB from Petrotoga mobilis (strain DSM 10674 / SJ95).